The primary structure comprises 529 residues: GMP synthase [glutamine-hydrolyzing] (529 aa).

The Glutamine amidotransferase type-1 domain occupies 9-211 (RILILDFGSQ…VKDICGCECL (203 aa)). C86 serves as the catalytic Nucleophile. Catalysis depends on residues H185 and E187. Positions 212-404 (WTPATIIDDA…LGLPYDMLYR (193 aa)) constitute a GMPS ATP-PPase domain. Position 239–245 (239–245 (SGGVDSS)) interacts with ATP.

Homodimer.

It carries out the reaction XMP + L-glutamine + ATP + H2O = GMP + L-glutamate + AMP + diphosphate + 2 H(+). The protein operates within purine metabolism; GMP biosynthesis; GMP from XMP (L-Gln route): step 1/1. Its function is as follows. Catalyzes the synthesis of GMP from XMP. The protein is GMP synthase [glutamine-hydrolyzing] of Aeromonas hydrophila subsp. hydrophila (strain ATCC 7966 / DSM 30187 / BCRC 13018 / CCUG 14551 / JCM 1027 / KCTC 2358 / NCIMB 9240 / NCTC 8049).